A 953-amino-acid chain; its full sequence is Coiled-coil domain-containing protein 14 (953 aa).

Residues 1–21 (MKRGIRRDPFRKRKLGGRAKK) show a composition bias toward basic residues. 2 disordered regions span residues 1 to 22 (MKRG…AKKV) and 52 to 72 (SGAR…AKLT). The residue at position 124 (serine 124) is a Phosphoserine. 2 disordered regions span residues 126-189 (SETA…TSDL) and 268-287 (PPCP…SQFA). Residues 145-154 (YGSKKKRHEK) show a composition bias toward basic residues. The span at 169-187 (DNKKQIPNEASARSERDTS) shows a compositional bias: basic and acidic residues. Over residues 277 to 287 (EVQTDGNSQFA) the composition is skewed to polar residues. Coiled-coil stretches lie at residues 383–413 (LATN…RDTK) and 483–618 (AMQP…AEKE). Residues serine 670, serine 754, and serine 798 each carry the phosphoserine modification.

In terms of assembly, interacts with CEP63.

It is found in the cytoplasm. The protein resides in the cytoskeleton. Its subcellular location is the microtubule organizing center. It localises to the centrosome. The protein localises to the centriolar satellite. Functionally, negatively regulates centriole duplication. Negatively regulates CEP63 and CDK2 centrosomal localization. The sequence is that of Coiled-coil domain-containing protein 14 (CCDC14) from Homo sapiens (Human).